Here is an 858-residue protein sequence, read N- to C-terminus: KN motif and ankyrin repeat domain-containing protein 2 (858 aa).

The disordered stretch occupies residues 1 to 29; that stretch reads MAQVLHVSAPFPGTPGPASPPAFPSKEPD. The segment at 1–72 is interaction with AIFM1; it reads MAQVLHVSAP…AVQRRPRLGS (72 aa). Residues 12 to 23 are compositionally biased toward pro residues; it reads PGTPGPASPPAF. Ser19, Ser83, Ser86, Ser89, and Ser92 each carry phosphoserine. Arg105 carries the post-translational modification Omega-N-methylarginine. The interval 140-182 is disordered; the sequence is AAPAGLGSLTPSAAGSTSSLVGVGLPPPTPRGSGLSTPVPPSA. A compositionally biased stretch (polar residues) spans 148-159; the sequence is LTPSAAGSTSSL. Residue Thr168 is modified to Phosphothreonine. Coiled-coil stretches lie at residues 183–234 and 282–313; these read GHLA…KSQK and EAAL…QADL. Residue Ser323 is modified to Phosphoserine. A Phosphothreonine modification is found at Thr329. Residues Ser356 and Ser375 each carry the phosphoserine modification. 2 disordered regions span residues 412 to 451 and 488 to 590; these read CDGA…PAHD and QKEE…SSAK. Low complexity predominate over residues 421-435; that stretch reads APAESSLSPPESEGA. Positions 436-446 are enriched in polar residues; it reads TQAQPEKNTGQ. Positions 488-499 are enriched in basic and acidic residues; it reads QKEEPTDPEAHR. The span at 509–528 shows a compositional bias: low complexity; sequence GSISPRYESSSEDSSTAENF. Position 547 is a phosphoserine (Ser547). Over residues 555-569 the composition is skewed to basic and acidic residues; that stretch reads RPKETAKAKTSREES. Thr559 is subject to Phosphothreonine. The stretch at 621–658 is one ANK 0; degenerate repeat; that stretch reads RELKVAYTTVLQEWLRLACRSDAHPELVRRHLVTFRAM. ANK repeat units follow at residues 673–703, 707–740, 745–774, 778–808, and 812–842; these read NGNT…QVDK, AGYS…DVNA, AGQT…DVNV, DGST…DISI, and DGST…KCSF. The interval 676 to 842 is interaction with NCOA1; it reads TALHYSVSHA…YSRMNIKCSF (167 aa).

In terms of assembly, interacts (non-phosphorylated form) with NCOA1; NCOA2 AND NCOA3. Interacts with AIFM1. Interacts with ARHGDIA; the interaction is direct and may regulate the interaction of ARHGDIA with RHOA, RAC1 and CDC42. Interacts (via ANK repeats 1-5) with KIF21A. Post-translationally, phosphorylated by casein kinase II upon estrogen stimulation. Phosphorylation induces the release by KANK2 of NCOA1 and its translocation to the nucleus where NCOA1 can activate gene transcription.

Its subcellular location is the cytoplasm. It localises to the mitochondrion. Functionally, involved in transcription regulation by sequestering in the cytoplasm nuclear receptor coactivators such as NCOA1, NCOA2 and NCOA3. Involved in regulation of caspase-independent apoptosis by sequestering the proapoptotic factor AIFM1 in mitochondria. Pro-apoptotic stimuli can induce its proteasomal degradation allowing the translocation of AIFM1 to the nucleus to induce apoptosis. Involved in the negative control of vitamin D receptor signaling pathway. Involved in actin stress fibers formation through its interaction with ARHGDIA and the regulation of the Rho signaling pathway. May thereby play a role in cell adhesion and migration, regulating for instance podocytes migration during development of the kidney. Through the Rho signaling pathway may also regulate cell proliferation. In Bos taurus (Bovine), this protein is KN motif and ankyrin repeat domain-containing protein 2 (KANK2).